The chain runs to 317 residues: Regulator of microtubule dynamics protein 1 (317 aa).

At Lys-168 the chain carries N6-succinyllysine. 2 TPR repeats span residues 171–207 (AICI…NPKD) and 225–261 (PWYQ…DPNF).

The protein belongs to the RMDN family. In terms of assembly, interacts with microtubules.

Its subcellular location is the cytoplasm. The protein localises to the cytoskeleton. It localises to the spindle. It is found in the spindle pole. The chain is Regulator of microtubule dynamics protein 1 (RMDN1) from Bos taurus (Bovine).